Here is a 170-residue protein sequence, read N- to C-terminus: MNSCLNELQAMQLRRLLETGLPLAARPYQRLAEQIGSVEEHVLQQIQRWQEEGLFRRVGLVLKHRALGFRANAMLVMDIPDAQVDEIGRRLGQAAGVNLCYQRPRRLPQWPYNLFCMVHGREREQVCQLIERLLADNGLSEVPHQLLFSTRAFKQCGGRFAPPLREVVNG.

The protein belongs to the Ahb/Nir family. In terms of assembly, probably forms a complex composed of NirD, NirL, NirG and NirH. All proteins are required for the total conversion of siroheme to didecarboxysiroheme.

The enzyme catalyses siroheme + 2 H(+) = 12,18-didecarboxysiroheme + 2 CO2. Its pathway is porphyrin-containing compound metabolism. In terms of biological role, involved in heme d1 biosynthesis. Catalyzes the decarboxylation of siroheme into didecarboxysiroheme. This is Siroheme decarboxylase NirL subunit from Stutzerimonas stutzeri (Pseudomonas stutzeri).